Here is a 367-residue protein sequence, read N- to C-terminus: Alginate lyase (367 aa).

The N-terminal stretch at 1 to 27 (MKTSHLIRITLPGALAAALLASQVSQA) is a signal peptide. Substrate is bound by residues 65 to 66 (SK), 138 to 139 (HT), and tyrosine 256.

The protein belongs to the polysaccharide lyase 5 family.

It is found in the periplasm. The catalysed reaction is Eliminative cleavage of alginate to give oligosaccharides with 4-deoxy-alpha-L-erythro-hex-4-enuronosyl groups at their non-reducing ends and beta-D-mannuronate at their reducing end.. Functionally, catalyzes the depolymerization of alginate by cleaving the beta-1,4 glycosidic bond between two adjacent sugar residues via a beta-elimination mechanism. May serve to degrade mislocalized alginate that is trapped in the periplasmic space. The protein is Alginate lyase of Pseudomonas paraeruginosa (strain DSM 24068 / PA7) (Pseudomonas aeruginosa (strain PA7)).